Reading from the N-terminus, the 993-residue chain is Receptor-type tyrosine-protein kinase FLT3 (993 aa).

The signal sequence occupies residues Met1–Thr26. The Extracellular portion of the chain corresponds to Asn27–Ser543. Cysteines 35 and 65 form a disulfide. Asn43 and Asn100 each carry an N-linked (GlcNAc...) asparagine glycan. Cys103 and Cys114 are oxidised to a cystine. An N-linked (GlcNAc...) asparagine glycan is attached at Asn151. Cystine bridges form between Cys199/Cys206, Cys232/Cys241, and Cys272/Cys330. Residues Pro253–Thr343 form the Ig-like C2-type domain. N-linked (GlcNAc...) asparagine glycans are attached at residues Asn306, Asn323, Asn351, and Asn354. Intrachain disulfides connect Cys368–Cys407 and Cys381–Cys392. Asn473, Asn502, and Asn541 each carry an N-linked (GlcNAc...) asparagine glycan. Residues Phe544–Cys563 traverse the membrane as a helical segment. Over His564–Ser993 the chain is Cytoplasmic. At Tyr572 the chain carries Phosphotyrosine. Ser574 bears the Phosphoserine mark. A phosphotyrosine; by autocatalysis mark is found at Tyr589, Tyr591, and Tyr599. Positions Tyr591–Tyr597 are important for normal regulation of the kinase activity and for maintaining the kinase in an inactive state in the absence of bound ligand. Residues Leu610 to Leu943 form the Protein kinase domain. ATP-binding positions include Leu616–Val624 and Lys644. Position 726 is a phosphotyrosine; by autocatalysis (Tyr726). Residue Ser759 is modified to Phosphoserine. Tyr768 and Tyr793 each carry phosphotyrosine. The active-site Proton acceptor is Asp811. 3 positions are modified to phosphotyrosine; by autocatalysis: Tyr842, Tyr955, and Tyr969. Ser993 carries the post-translational modification Phosphoserine.

This sequence belongs to the protein kinase superfamily. Tyr protein kinase family. CSF-1/PDGF receptor subfamily. Monomer in the absence of bound FLT3LG. Homodimer in the presence of bound FLT3LG. Interacts with FIZ1 following ligand activation. Interacts with FES, FER, LYN, FGR, HCK, SRC and GRB2. Interacts with PTPRJ/DEP-1 and PTPN11/SHP2. Interacts with RNF115 and RNF126. As to quaternary structure, (Microbial infection) Interacts with human cytomegalovirus protein UL7. N-glycosylated, contains complex N-glycans with sialic acid. Post-translationally, autophosphorylated on several tyrosine residues in response to FLT3LG binding. FLT3LG binding also increases phosphorylation of mutant kinases that are constitutively activated. Dephosphorylated by PTPRJ/DEP-1, PTPN1, PTPN6/SHP-1, and to a lesser degree by PTPN12. Dephosphorylation is important for export from the endoplasmic reticulum and location at the cell membrane. In terms of processing, rapidly ubiquitinated by UBE2L6 and the E3 ubiquitin-protein ligase SIAH1 after autophosphorylation, leading to its proteasomal degradation. As to expression, detected in bone marrow, in hematopoietic stem cells, in myeloid progenitor cells and in granulocyte/macrophage progenitor cells (at protein level). Detected in bone marrow, liver, thymus, spleen and lymph node, and at low levels in kidney and pancreas. Highly expressed in T-cell leukemia.

Its subcellular location is the membrane. The protein localises to the endoplasmic reticulum lumen. It carries out the reaction L-tyrosyl-[protein] + ATP = O-phospho-L-tyrosyl-[protein] + ADP + H(+). Its activity is regulated as follows. Present in an inactive conformation in the absence of bound ligand. FLT3LG binding leads to dimerization and activation by autophosphorylation. In terms of biological role, tyrosine-protein kinase that acts as a cell-surface receptor for the cytokine FLT3LG and regulates differentiation, proliferation and survival of hematopoietic progenitor cells and of dendritic cells. Promotes phosphorylation of SHC1 and AKT1, and activation of the downstream effector MTOR. Promotes activation of RAS signaling and phosphorylation of downstream kinases, including MAPK1/ERK2 and/or MAPK3/ERK1. Promotes phosphorylation of FES, FER, PTPN6/SHP, PTPN11/SHP-2, PLCG1, and STAT5A and/or STAT5B. Activation of wild-type FLT3 causes only marginal activation of STAT5A or STAT5B. Mutations that cause constitutive kinase activity promote cell proliferation and resistance to apoptosis via the activation of multiple signaling pathways. This chain is Receptor-type tyrosine-protein kinase FLT3 (FLT3), found in Homo sapiens (Human).